We begin with the raw amino-acid sequence, 74 residues long: UPF0248 protein MK0350 (74 aa).

It belongs to the UPF0248 family.

The chain is UPF0248 protein MK0350 from Methanopyrus kandleri (strain AV19 / DSM 6324 / JCM 9639 / NBRC 100938).